The following is a 299-amino-acid chain: Taste receptor type 2 member 50 (299 aa).

Residue Met1 is a topological domain, extracellular. Residues Ile2–Phe22 traverse the membrane as a helical segment. Topologically, residues Ala23 to Arg55 are cytoplasmic. Residues Ile56–Tyr76 traverse the membrane as a helical segment. Residues Ser77–Ala87 are Extracellular-facing. A helical transmembrane segment spans residues Trp88–Leu108. Topologically, residues Lys109–Arg126 are cytoplasmic. Residues Ser127–Ala147 form a helical membrane-spanning segment. Residues Asn148 to Thr181 lie on the Extracellular side of the membrane. Asn161 carries N-linked (GlcNAc...) asparagine glycosylation. Residues Leu182–Leu202 form a helical membrane-spanning segment. The Cytoplasmic portion of the chain corresponds to Cys203–Gln229. Residues Thr230–Trp250 traverse the membrane as a helical segment. Residues Ser251 to Pro259 are Extracellular-facing. The chain crosses the membrane as a helical span at residues Val260 to Ile280. The Cytoplasmic portion of the chain corresponds to Trp281–Cys299.

The protein belongs to the G-protein coupled receptor T2R family. In terms of tissue distribution, expressed in subsets of taste receptor cells of the tongue and exclusively in gustducin-positive cells.

The protein localises to the membrane. In terms of biological role, receptor that may play a role in the perception of bitterness and is gustducin-linked. May play a role in sensing the chemical composition of the gastrointestinal content. The activity of this receptor may stimulate alpha gustducin, mediate PLC-beta-2 activation and lead to the gating of TRPM5. This chain is Taste receptor type 2 member 50 (TAS2R50), found in Homo sapiens (Human).